We begin with the raw amino-acid sequence, 269 residues long: Protein NETWORKED 3A (269 aa).

The NAB domain maps to 6 to 87 (SKWWWIGNHN…ERYDLLRPSS (82 aa)). The tract at residues 87 to 113 (SVHKHGSDSESHEKSSTCDESSWSEAC) is disordered. Positions 91 to 103 (HGSDSESHEKSST) are enriched in basic and acidic residues. Residues 155 to 214 (NGNSEMMKIEIERLREENKVYSEMVREKDEEKREAIRQMSVAIQMLKEENSELKKRVTNT) adopt a coiled-coil conformation.

It belongs to the NET family.

Its subcellular location is the cytoplasm. It is found in the cytoskeleton. The protein localises to the nucleus membrane. Its function is as follows. Plant-specific actin binding protein. May be part of a membrane-cytoskeletal adapter complex. This chain is Protein NETWORKED 3A, found in Arabidopsis thaliana (Mouse-ear cress).